We begin with the raw amino-acid sequence, 472 residues long: Eukaryotic translation initiation factor 2 subunit 3 (472 aa).

N-acetylalanine; partial is present on Ala-2. Ser-16 carries the phosphoserine modification. Residues 39–248 (QATINIGTIG…IVKKIPVPPR (210 aa)) form the tr-type G domain. Positions 48–55 (GHVAHGKS) are G1. 51–56 (AHGKST) lines the GTP pocket. The segment at 76–80 (NITIK) is G2. A G3 region spans residues 134–137 (DCPG). Residues 190-193 (NKID) and 225-227 (SAQ) contribute to the GTP site. The interval 190–193 (NKID) is G4. Residues 225 to 227 (SAQ) are G5. Positions 457-469 (GQIRRGVTIKPTV) are interacts with CDC123.

Belongs to the TRAFAC class translation factor GTPase superfamily. Classic translation factor GTPase family. EIF2G subfamily. Eukaryotic translation initiation factor 2 eIF2 is a heterotrimeric complex composed of an alpha (EIF2S1), a beta (EIF2S2) and a gamma (EIF2S3) chain. eIF2 is member of the 43S pre-initiation complex (43S PIC). Interacts (via C-terminus) with CDC123; the interaction is direct. As to expression, expressed in testis, brain, liver and muscle.

It localises to the cytoplasm. It is found in the cytosol. It carries out the reaction GTP + H2O = GDP + phosphate + H(+). In terms of biological role, member of the eIF2 complex that functions in the early steps of protein synthesis by forming a ternary complex with GTP and initiator tRNA. This complex binds to a 40S ribosomal subunit, followed by mRNA binding to form the 43S pre-initiation complex (43S PIC). Junction of the 60S ribosomal subunit to form the 80S initiation complex is preceded by hydrolysis of the GTP bound to eIF2 and release of an eIF2-GDP binary complex. In order for eIF2 to recycle and catalyze another round of initiation, the GDP bound to eIF2 must exchange with GTP by way of a reaction catalyzed by eIF-2B. This is Eukaryotic translation initiation factor 2 subunit 3 (EIF2S3) from Homo sapiens (Human).